We begin with the raw amino-acid sequence, 217 residues long: Probable GTP-binding protein EngB (217 aa).

An EngB-type G domain is found at threonine 27–glutamate 201. GTP contacts are provided by residues glycine 35–serine 42, glycine 62–leucine 66, aspartate 80–glycine 83, threonine 147–aspartate 150, and phenylalanine 180–serine 182. Mg(2+) contacts are provided by serine 42 and threonine 64.

Belongs to the TRAFAC class TrmE-Era-EngA-EngB-Septin-like GTPase superfamily. EngB GTPase family. The cofactor is Mg(2+).

Its function is as follows. Necessary for normal cell division and for the maintenance of normal septation. The protein is Probable GTP-binding protein EngB of Edwardsiella ictaluri (strain 93-146).